A 256-amino-acid chain; its full sequence is Ribonuclease T2 (256 aa).

The signal sequence occupies residues 1 to 24 (MRPAALRGALLGCLCLALLCLGGA). Cys48 and Cys55 form a disulfide bridge. Residue His65 is part of the active site. 3 cysteine pairs are disulfide-bonded: Cys75-Cys121, Cys184-Cys241, and Cys202-Cys213. N-linked (GlcNAc...) asparagine glycosylation is found at Asn76 and Asn106. Active-site residues include Glu114 and His118. An N-linked (GlcNAc...) asparagine glycan is attached at Asn212.

It belongs to the RNase T2 family. Ubiquitous. Higher expression levels observed in the temporal lobe and fetal brain.

The protein resides in the secreted. The protein localises to the lysosome lumen. It localises to the endoplasmic reticulum lumen. It is found in the mitochondrion intermembrane space. It carries out the reaction a ribonucleotidyl-ribonucleotide-RNA + H2O = a 3'-end 3'-phospho-ribonucleotide-RNA + a 5'-end dephospho-ribonucleoside-RNA + H(+). The enzyme catalyses an adenylyl-uridine-RNA = a 3'-end 2',3'-cyclophospho-AMP-RNA + a 5'-end dephospho-uridine-RNA. It catalyses the reaction a guanylyl-uridine-RNA = a 3'-end 2',3'-cyclophospho-GMP-RNA + a 5'-end dephospho-uridine-RNA. With respect to regulation, inhibited by Zn(2+) and Cu(2+). Its function is as follows. Ribonuclease that plays an essential role in innate immune response by recognizing and degrading RNAs from microbial pathogens that are subsequently sensed by TLR8. Cleaves preferentially single-stranded RNA molecules between purine and uridine residues, which critically contributes to the supply of catabolic uridine and the generation of purine-2',3'-cyclophosphate-terminated oligoribonucleotides. In turn, RNase T2 degradation products promote the RNA-dependent activation of TLR8. In plasmacytoid dendritic cells, it cooperates with PLD3 or PLD4 5'-&gt;3' exonucleases to process RNA fragments and release 2',3'-cyclic guanosine monophosphate (2',3'-cGMP), a potent stimulatory ligand for TLR7. Also plays a key role in degradation of mitochondrial RNA and processing of non-coding RNA imported from the cytosol into mitochondria. Participates as well in degradation of mitochondrion-associated cytosolic rRNAs. The polypeptide is Ribonuclease T2 (RNASET2) (Homo sapiens (Human)).